Consider the following 190-residue polypeptide: Imidazole glycerol phosphate synthase subunit HisH (190 aa).

The Glutamine amidotransferase type-1 domain maps to 2 to 190 (IVGVVDYTVG…IKRFLAVAKR (189 aa)). Cysteine 73 (nucleophile) is an active-site residue. Catalysis depends on residues histidine 169 and glutamate 171.

In terms of assembly, heterodimer of HisH and HisF.

The protein localises to the cytoplasm. The catalysed reaction is 5-[(5-phospho-1-deoxy-D-ribulos-1-ylimino)methylamino]-1-(5-phospho-beta-D-ribosyl)imidazole-4-carboxamide + L-glutamine = D-erythro-1-(imidazol-4-yl)glycerol 3-phosphate + 5-amino-1-(5-phospho-beta-D-ribosyl)imidazole-4-carboxamide + L-glutamate + H(+). It catalyses the reaction L-glutamine + H2O = L-glutamate + NH4(+). Its pathway is amino-acid biosynthesis; L-histidine biosynthesis; L-histidine from 5-phospho-alpha-D-ribose 1-diphosphate: step 5/9. Its function is as follows. IGPS catalyzes the conversion of PRFAR and glutamine to IGP, AICAR and glutamate. The HisH subunit catalyzes the hydrolysis of glutamine to glutamate and ammonia as part of the synthesis of IGP and AICAR. The resulting ammonia molecule is channeled to the active site of HisF. The sequence is that of Imidazole glycerol phosphate synthase subunit HisH from Pyrobaculum aerophilum (strain ATCC 51768 / DSM 7523 / JCM 9630 / CIP 104966 / NBRC 100827 / IM2).